Consider the following 970-residue polypeptide: Protein translocase subunit SecA (970 aa).

Residues glutamine 99, 117–121 (GEGKT), and aspartate 631 contribute to the ATP site.

Belongs to the SecA family. In terms of assembly, monomer and homodimer. Part of the essential Sec protein translocation apparatus which comprises SecA, SecYEG and auxiliary proteins SecDF. Other proteins may also be involved.

It is found in the cell inner membrane. It localises to the cytoplasm. The catalysed reaction is ATP + H2O + cellular proteinSide 1 = ADP + phosphate + cellular proteinSide 2.. In terms of biological role, part of the Sec protein translocase complex. Interacts with the SecYEG preprotein conducting channel. Has a central role in coupling the hydrolysis of ATP to the transfer of proteins into and across the cell membrane, serving as an ATP-driven molecular motor driving the stepwise translocation of polypeptide chains across the membrane. In Chlamydia pneumoniae (Chlamydophila pneumoniae), this protein is Protein translocase subunit SecA.